Consider the following 158-residue polypeptide: Pycsar effector protein SaPycTM (158 aa).

3 helical membrane-spanning segments follow: residues 20 to 40 (FADA…NFNF), 53 to 73 (IFNF…AFAV), and 136 to 156 (VFII…FQII).

Its subcellular location is the cell membrane. Functionally, pycsar (pyrimidine cyclase system for antiphage resistance) provides immunity against bacteriophage. The pyrimidine cyclase (PycC) synthesizes cyclic nucleotides in response to infection; these serve as specific second messenger signals. The signals activate the adjacent effector, leading to bacterial cell death and abortive phage infection. A clade E Pycsar system. Its function is as follows. The effector gene of a two-gene Pycsar system. Expression of this and adjacent SaPycC cytidylate cyclase (AC P0DV38) probably confers resistance to bacteriophage. The genes are probably only expressed in response to bacteriophage infection. Probably only responds to cCMP (produced by its cognate NTP cyclase), acts by impairing membrane integrity. The polypeptide is Pycsar effector protein SaPycTM (Staphylococcus aureus).